A 1403-amino-acid polypeptide reads, in one-letter code: Sushi, nidogen and EGF-like domain-containing protein 1 (1403 aa).

The N-terminal stretch at 1–24 (MRRGAAWALLLAAALGLGARGVRA) is a signal peptide. The region spanning 103–258 (AFWADVDNRR…GRWAFRIDDA (156 aa)) is the NIDO domain. 3 consecutive EGF-like domains span residues 268-309 (TTSV…RRCH), 311-347 (DVNE…PTCE), and 349-385 (AQSP…ATCE). Intrachain disulfides connect Cys-272–Cys-284, Cys-278–Cys-297, Cys-299–Cys-308, Cys-315–Cys-326, Cys-320–Cys-335, Cys-337–Cys-346, Cys-353–Cys-364, Cys-358–Cys-373, Cys-375–Cys-384, Cys-391–Cys-402, Cys-396–Cys-411, Cys-413–Cys-422, Cys-433–Cys-444, Cys-438–Cys-453, Cys-455–Cys-464, Cys-472–Cys-480, Cys-474–Cys-488, and Cys-490–Cys-499. Asn-292 is a glycosylation site (N-linked (GlcNAc...) asparagine). One can recognise an EGF-like 4; calcium-binding domain in the interval 387-423 (DVDECSSDPCLNGGSCVDLVGNYSCICVEPFEGPQCE). The N-linked (GlcNAc...) asparagine glycan is linked to Asn-408. 2 consecutive EGF-like domains span residues 429-465 (VPSP…LDCR) and 468-500 (ILND…LLCE). A glycan (N-linked (GlcNAc...) asparagine) is linked at Asn-484. N-linked (GlcNAc...) asparagine glycosylation occurs at Asn-536. EGF-like domains are found at residues 541 to 577 (LPSP…RHCE), 580 to 616 (RPHL…RHCE), 619 to 655 (KPDS…RHCE), and 657 to 693 (APSP…HRCQ). Disulfide bonds link Cys-545/Cys-556, Cys-550/Cys-565, Cys-567/Cys-576, Cys-584/Cys-595, Cys-589/Cys-604, Cys-606/Cys-615, Cys-623/Cys-634, Cys-628/Cys-643, Cys-645/Cys-654, Cys-661/Cys-672, Cys-666/Cys-681, Cys-683/Cys-692, Cys-698/Cys-739, Cys-724/Cys-751, Cys-757/Cys-768, Cys-762/Cys-777, Cys-779/Cys-788, Cys-795/Cys-806, Cys-800/Cys-815, Cys-817/Cys-826, Cys-833/Cys-844, Cys-838/Cys-853, Cys-855/Cys-864, Cys-871/Cys-882, Cys-876/Cys-891, and Cys-893/Cys-902. One can recognise a Sushi domain in the interval 696-753 (VDCGQPEEVKHATMRLNGTRMGSVALYTCDPGFSLSVLSHMRVCQPQGVWSQPPQCIE). Asn-712 carries N-linked (GlcNAc...) asparagine glycosylation. An EGF-like 11; calcium-binding domain is found at 753–789 (EVDECQSQPCLHKGSCQDLIAGYQCLCSPGYEGVHCE). In terms of domain architecture, EGF-like 12; calcium-binding spans 791-827 (ETDECQAQPCRNGGSCRDLPGAFICQCPEGFVGTHCE). EGF-like domains follow at residues 829-865 (EVDA…YNCE) and 867-903 (VSDP…KDCT). A glycan (N-linked (GlcNAc...) asparagine) is linked at Asn-886. Fibronectin type-III domains are found at residues 908–1006 (PPTA…TRPR), 1007–1105 (PIED…TRPL), and 1106–1200 (PPAN…SPRD). Residues Asn-977, Asn-1015, Asn-1109, Asn-1139, and Asn-1298 are each glycosylated (N-linked (GlcNAc...) asparagine). The segment at 1295–1314 (LPKNNSKDTESTPGSCSEDT) is disordered. Over residues 1305–1314 (STPGSCSEDT) the composition is skewed to polar residues. The 37-residue stretch at 1306–1342 (TPGSCSEDTCQNGGTCVPGANAHSCDCRPGFKGRHCE) folds into the EGF-like 15 domain. 3 disulfide bridges follow: Cys-1310–Cys-1321, Cys-1315–Cys-1330, and Cys-1332–Cys-1341.

Post-translationally, phosphorylated on serine and threonine residues. N-glycosylated. Expressed in liver.

The protein localises to the secreted. Its subcellular location is the extracellular space. It localises to the extracellular matrix. The chain is Sushi, nidogen and EGF-like domain-containing protein 1 from Rattus norvegicus (Rat).